A 94-amino-acid chain; its full sequence is Large ribosomal subunit protein bL31 (94 aa).

Residues 64–94 form a disordered region; the sequence is KYGMANPDEDSTKNTKSSKKETSEDSSSKGS. A compositionally biased stretch (basic and acidic residues) spans 73–94; sequence DSTKNTKSSKKETSEDSSSKGS.

This sequence belongs to the bacterial ribosomal protein bL31 family. Type A subfamily. In terms of assembly, part of the 50S ribosomal subunit.

Functionally, binds the 23S rRNA. The polypeptide is Large ribosomal subunit protein bL31 (Prochlorococcus marinus (strain SARG / CCMP1375 / SS120)).